The chain runs to 155 residues: Regulatory protein RecX (155 aa).

The protein belongs to the RecX family.

The protein localises to the cytoplasm. Its function is as follows. Modulates RecA activity. The sequence is that of Regulatory protein RecX from Pseudomonas syringae pv. tomato (strain ATCC BAA-871 / DC3000).